The primary structure comprises 1153 residues: Nitric oxide synthase, inducible (1153 aa).

A DINNN-motif; mediates interaction with SPSB1, SPSB2 and SPSB4 motif is present at residues 23-27 (DINNN). Zn(2+) contacts are provided by Cys-110 and Cys-115. Residue Ser-118 participates in (6R)-L-erythro-5,6,7,8-tetrahydrobiopterin binding. Cys-200 contacts heme b. Ser-234 bears the Phosphoserine; by PKA mark. L-arginine is bound by residues Gln-263, Trp-372, Tyr-373, and Glu-377. Positions 381, 462, 463, and 476 each coordinate (6R)-L-erythro-5,6,7,8-tetrahydrobiopterin. Tyr-491 contacts heme b. The calmodulin-binding stretch occupies residues 515 to 535 (LKVLVKAVLFACMLMRKTMAS). A Flavodoxin-like domain is found at 539-677 (VTILFATETG…AFRSWAVQTF (139 aa)). 5 residues coordinate FMN: Thr-545, Glu-546, Thr-547, Lys-549, and Ser-550. A Phosphotyrosine modification is found at Tyr-575. Ser-578 carries the post-translational modification Phosphoserine; by PKA. FMN contacts are provided by Ser-591, Thr-592, Ser-628, Arg-633, Cys-635, Glu-661, and Gln-665. One can recognise an FAD-binding FR-type domain in the interval 730-970 (KNVFTMRLKS…VRNASGFHLP (241 aa)). NADP(+) is bound at residue Arg-750. Residue His-772 coordinates FAD. At Ser-892 the chain carries Phosphoserine; by PKA. FAD contacts are provided by Arg-906, Tyr-908, Ser-909, Thr-924, and Ala-926. Residue Thr-929 coordinates NADP(+). Residues Tyr-930, Val-943, Cys-944, and Ser-945 each coordinate FAD. Positions 984, 1017, 1046, 1047, 1053, 1055, 1057, and 1090 each coordinate NADP(+).

The protein belongs to the NOS family. As to quaternary structure, homodimer. Interacts with NHERF1. Interacts with GAPDH; induced by oxidatively-modified low-densitity lipoprotein (LDL(ox)). Interacts with S100A8 and S100A9 to form the iNOS-S100A8/9 transnitrosylase complex. Interacts with SPSB1, SPSB2 and SPSB4. Interacts with ELOC and CUL5 in the presence of SPSB1 or SPSB2 or SPSB4. Forms a complex with ASL, ASS1 and HSP90AA1; the complex regulates cell-autonomous L-arginine synthesis and citrulline recycling while channeling extracellular L-arginine to nitric oxide synthesis pathway. Heme b serves as cofactor. Requires FAD as cofactor. FMN is required as a cofactor. It depends on (6R)-L-erythro-5,6,7,8-tetrahydrobiopterin as a cofactor. Post-translationally, polyubiquitinated; mediated by SPSB1, SPSB2 and SPSB4, leading to proteasomal degradation. In terms of tissue distribution, expressed in the liver, retina, bone cells and airway epithelial cells of the lung. Not expressed in the platelets. Expressed in chondrocytes.

It localises to the cytoplasm. It is found in the cytosol. The enzyme catalyses 2 L-arginine + 3 NADPH + 4 O2 + H(+) = 2 L-citrulline + 2 nitric oxide + 3 NADP(+) + 4 H2O. Its activity is regulated as follows. Regulated by calcium/calmodulin. Aspirin inhibits expression and function of this enzyme and effects may be exerted at the level of translational/post-translational modification and directly on the catalytic activity. Functionally, produces nitric oxide (NO) which is a messenger molecule with diverse functions throughout the body. In macrophages, NO mediates tumoricidal and bactericidal actions. Also has nitrosylase activity and mediates cysteine S-nitrosylation of cytoplasmic target proteins such PTGS2/COX2. As component of the iNOS-S100A8/9 transnitrosylase complex involved in the selective inflammatory stimulus-dependent S-nitrosylation of GAPDH on 'Cys-247' implicated in regulation of the GAIT complex activity and probably multiple targets including ANXA5, EZR, MSN and VIM. Involved in inflammation, enhances the synthesis of pro-inflammatory mediators such as IL6 and IL8. The sequence is that of Nitric oxide synthase, inducible from Homo sapiens (Human).